Consider the following 436-residue polypeptide: Testis-expressed protein 44 (436 aa).

2 stretches are compositionally biased toward acidic residues: residues 1–10 (MTTEPLEDPE) and 45–54 (LPDEVPPEDI). Disordered stretches follow at residues 1–142 (MTTE…LTSL) and 165–307 (AENN…SLYG). Polar residues-rich tracts occupy residues 81 to 103 (ASMQ…TDTS) and 167 to 195 (NNRT…TVSE). A compositionally biased stretch (basic and acidic residues) spans 234–247 (EPTKSADQEAEDFK). Pro residues predominate over residues 273 to 289 (QAPPSPNSPADSPPPSP). Ser-375 carries the phosphoserine modification.

The protein localises to the cytoplasm. This chain is Testis-expressed protein 44 (Tex44), found in Rattus norvegicus (Rat).